A 912-amino-acid polypeptide reads, in one-letter code: Microtubule-associated protein 10 (912 aa).

Disordered stretches follow at residues 31–50 (VAEEEQKEEGEGASPPRPSR), 209–239 (KSVEVSPQTWQENQQLQQPDSEPSPGDADKP), 254–296 (GRAF…QEGT), 335–366 (ASEEWDDGTFLKENVNPPTHTNPPEHTNSATG), 443–469 (SPESSVKSTCKSESKKDKLSVGENEKS), and 730–859 (RACD…VSSY). Positions 211–229 (VEVSPQTWQENQQLQQPDS) are enriched in polar residues. Residues 254–263 (GRAFHSKADS) show a composition bias toward basic and acidic residues. Positions 266–295 (TDSMENGKTNSDMCSKGSSERSVSPPNQEG) are enriched in polar residues. Positions 347 to 362 (ENVNPPTHTNPPEHTN) are enriched in low complexity. Basic and acidic residues predominate over residues 452–468 (CKSESKKDKLSVGENEK). Residues 735–768 (SPGTENPKNSQHTSTSSETRLSIRKNSSAKSSIL) are compositionally biased toward polar residues. Residues 796-807 (EASSSDFSSSQW) are compositionally biased toward low complexity. Polar residues predominate over residues 841–859 (GCKSSEKSQSPRTSQVSSY).

As to quaternary structure, interacts (via middle region) with microtubules.

It localises to the cytoplasm. The protein localises to the cytoskeleton. The protein resides in the spindle pole. It is found in the microtubule organizing center. Its subcellular location is the centrosome. It localises to the midbody. Functionally, microtubule-associated protein (MAP) that plays a role in the regulation of cell division; promotes microtubule stability and participates in the organization of the spindle midzone and normal progress of cytokinesis. The sequence is that of Microtubule-associated protein 10 (MAP10) from Bos taurus (Bovine).